We begin with the raw amino-acid sequence, 349 residues long: MNVLGIETTCDETAAAIVAAAEDGRGVIRANEVLSQIAEHAAYGGVVPEIAARAHVEVLDRLIARALHETGLVFDDLDGIAVAAGPGLIGGVLVGLVTAKTLALVTRKPLLAVNHLEAHALTARLTEGIGFPYLLLLASGGHTQLVAVKGVGEYLRLGTTIDDAIGEAFDKVAKLLGLAYPGGPEVERAAETGNPERFALPRPMLGRREPNFSLSGLKTALRLEAERIAPLTNQDVADLCASFQAAIVDVVVDRVRGALRAFGDVAGHPTALVAAGGVAANGALRRALTQLAGEAGLPLVAPPLPLCGDNGAMIAWAGLERLRLGLIDDITAPARPRWPFAEALPATAG.

Fe cation-binding residues include histidine 115 and histidine 119. Substrate-binding positions include 137 to 141 (LASGG), aspartate 170, glycine 183, and asparagine 281. Aspartate 309 is a binding site for Fe cation.

It belongs to the KAE1 / TsaD family. Fe(2+) serves as cofactor.

It localises to the cytoplasm. The enzyme catalyses L-threonylcarbamoyladenylate + adenosine(37) in tRNA = N(6)-L-threonylcarbamoyladenosine(37) in tRNA + AMP + H(+). Functionally, required for the formation of a threonylcarbamoyl group on adenosine at position 37 (t(6)A37) in tRNAs that read codons beginning with adenine. Is involved in the transfer of the threonylcarbamoyl moiety of threonylcarbamoyl-AMP (TC-AMP) to the N6 group of A37, together with TsaE and TsaB. TsaD likely plays a direct catalytic role in this reaction. The protein is tRNA N6-adenosine threonylcarbamoyltransferase of Methylobacterium nodulans (strain LMG 21967 / CNCM I-2342 / ORS 2060).